The chain runs to 321 residues: Tetraketide alpha-pyrone reductase 2 (321 aa).

N-acetylserine is present on S2. Residues 4-28, K40, and Y160 contribute to the NADP(+) site; that span reads YLVTGGTGFIASYIIKSLLELGHTV.

The protein belongs to the NAD(P)-dependent epimerase/dehydratase family. Dihydroflavonol-4-reductase subfamily.

The protein resides in the cytoplasm. In terms of biological role, may be involved in the biosynthesis of hydroxylated tetraketide compounds that serve as sporopollenin precursors (the main constituents of exine). Acts on tetraketide alpha-pyrones and reduces the carbonyl function on the tetraketide alkyl chain to a secondary alcohol function. The protein is Tetraketide alpha-pyrone reductase 2 (TKPR2) of Arabidopsis thaliana (Mouse-ear cress).